Consider the following 861-residue polypeptide: ToMV resistance protein Tm-2(GCR236) (861 aa).

The stretch at 63-83 forms a coiled coil; sequence VKNLLKDIQELAGDVEDLLDD. Residues 162–388 form the NB-ARC domain; it reads DDFNMLQAKL…LESMGHKVQD (227 aa). 185–192 is a binding site for ATP; the sequence is GMPGLGKT. LRR repeat units follow at residues 225–248, 305–327, 388–411, 449–472, 510–536, 585–608, 609–631, 652–680, 689–710, 712–735, 736–758, 784–810, and 811–835; these read LDIA…NLRS, LHAL…IFNF, DGCA…CFLY, LAED…TYNG, VARL…KLEK, MTCL…IVKL, TRLE…VWES, ISSF…FFEP, LRKL…IFSP, LKAL…LSSY, PHIA…SFPP, LRKL…GYSF, and PQLE…DVSM.

The protein belongs to the disease resistance NB-LRR family. (Microbial infection) Interacts with tobamoviruses mouvement protein at the plasma membrane; this interaction triggers defense responses leading to programmed cell death. In terms of assembly, binds to HSP90 proteins; this interaction seems required for defense responses toward tobamoviruses.

The protein localises to the cell membrane. Functionally, inhibitor of viral mouvements which confers resistance to some tobamoviruses including tomato mosaic virus (ToMV) (e.g. isolates L, W3 and SL-1) and tobacco mosaic virus (TMV), but not to resistance-breaking isolates (e.g. B7, LT1, LII, Ltbl, ToMV2, and ToMV1-2) ToMV and tomato brown rugose fruit virus (ToBRFV). Elicits a hypersensitive reaction in response to avirulent (Avr) movement proteins from resistance inducing tobamoviruses (e.g. ToMV and TMV) strains, thus leading to programmed cell death. This Solanum lycopersicum (Tomato) protein is ToMV resistance protein Tm-2(GCR236).